We begin with the raw amino-acid sequence, 330 residues long: Lipoyl synthase (330 aa).

Positions 77, 82, 88, 103, 107, 110, and 317 each coordinate [4Fe-4S] cluster. A Radical SAM core domain is found at 89–306 (FNHGTATFMI…RSEAERMGFE (218 aa)).

The protein belongs to the radical SAM superfamily. Lipoyl synthase family. It depends on [4Fe-4S] cluster as a cofactor.

It is found in the cytoplasm. The catalysed reaction is [[Fe-S] cluster scaffold protein carrying a second [4Fe-4S](2+) cluster] + N(6)-octanoyl-L-lysyl-[protein] + 2 oxidized [2Fe-2S]-[ferredoxin] + 2 S-adenosyl-L-methionine + 4 H(+) = [[Fe-S] cluster scaffold protein] + N(6)-[(R)-dihydrolipoyl]-L-lysyl-[protein] + 4 Fe(3+) + 2 hydrogen sulfide + 2 5'-deoxyadenosine + 2 L-methionine + 2 reduced [2Fe-2S]-[ferredoxin]. The protein operates within protein modification; protein lipoylation via endogenous pathway; protein N(6)-(lipoyl)lysine from octanoyl-[acyl-carrier-protein]: step 2/2. Its function is as follows. Catalyzes the radical-mediated insertion of two sulfur atoms into the C-6 and C-8 positions of the octanoyl moiety bound to the lipoyl domains of lipoate-dependent enzymes, thereby converting the octanoylated domains into lipoylated derivatives. The chain is Lipoyl synthase from Actinobacillus pleuropneumoniae serotype 3 (strain JL03).